Consider the following 36-residue polypeptide: Photosystem II reaction center protein M (36 aa).

Residues 5–25 form a helical membrane-spanning segment; that stretch reads ILGLIATALFIIIPTSFLLIL.

Belongs to the PsbM family. As to quaternary structure, PSII is composed of 1 copy each of membrane proteins PsbA, PsbB, PsbC, PsbD, PsbE, PsbF, PsbH, PsbI, PsbJ, PsbK, PsbL, PsbM, PsbT, PsbX, PsbY, PsbZ, Psb30/Ycf12, at least 3 peripheral proteins of the oxygen-evolving complex and a large number of cofactors. It forms dimeric complexes.

It localises to the plastid. The protein localises to the chloroplast thylakoid membrane. Functionally, one of the components of the core complex of photosystem II (PSII). PSII is a light-driven water:plastoquinone oxidoreductase that uses light energy to abstract electrons from H(2)O, generating O(2) and a proton gradient subsequently used for ATP formation. It consists of a core antenna complex that captures photons, and an electron transfer chain that converts photonic excitation into a charge separation. This subunit is found at the monomer-monomer interface. This is Photosystem II reaction center protein M from Chlorokybus atmophyticus (Soil alga).